The following is a 133-amino-acid chain: Vesicle transport protein GOT1A (133 aa).

The Cytoplasmic segment spans residues 1 to 9 (MISITEWQK). A helical membrane pass occupies residues 10-30 (IGVGITGFGVFFILFGILLYF). A topological domain (lumenal) is located at residue aspartate 31. The chain crosses the membrane as a helical span at residues 32–52 (SVLLAFGNLLFLTGLSLIIGL). Topologically, residues 53–68 (RRTFAFFFQRHKLKGT) are cytoplasmic. A helical membrane pass occupies residues 69-89 (SFFLGGVAIVLLRWPLLGMLL). The Lumenal portion of the chain corresponds to 90–92 (EAY). A helical transmembrane segment spans residues 93 to 113 (GFISLFKGFFPVVFGFLGSAF). At 114-133 (NIPFLSTLFQKLQGSSSSMV) the chain is on the cytoplasmic side.

The protein belongs to the GOT1 family.

It is found in the golgi apparatus membrane. Functionally, may be involved in fusion of ER-derived transport vesicles with the Golgi complex. The polypeptide is Vesicle transport protein GOT1A (Mus musculus (Mouse)).